Here is a 362-residue protein sequence, read N- to C-terminus: 3-isopropylmalate dehydrogenase (362 aa).

77–88 (GPKWGTGAVRPE) contacts NAD(+). Residues arginine 95, arginine 105, arginine 134, and aspartate 223 each contribute to the substrate site. Mg(2+) is bound by residues aspartate 223, aspartate 248, and aspartate 252. 287 to 298 (GSAPDLPANKVN) contacts NAD(+).

This sequence belongs to the isocitrate and isopropylmalate dehydrogenases family. As to quaternary structure, homodimer. It depends on Mg(2+) as a cofactor. Mn(2+) serves as cofactor.

It is found in the cytoplasm. The catalysed reaction is (2R,3S)-3-isopropylmalate + NAD(+) = 4-methyl-2-oxopentanoate + CO2 + NADH. Its pathway is amino-acid biosynthesis; L-leucine biosynthesis; L-leucine from 3-methyl-2-oxobutanoate: step 3/4. Its function is as follows. Catalyzes the oxidation of 3-carboxy-2-hydroxy-4-methylpentanoate (3-isopropylmalate) to 3-carboxy-4-methyl-2-oxopentanoate. The product decarboxylates to 4-methyl-2 oxopentanoate. The protein is 3-isopropylmalate dehydrogenase (LEU2) of Kluyveromyces lactis (strain ATCC 8585 / CBS 2359 / DSM 70799 / NBRC 1267 / NRRL Y-1140 / WM37) (Yeast).